Here is a 108-residue protein sequence, read N- to C-terminus: Transcription factor S (108 aa).

Cys-5, Cys-8, Cys-21, Cys-24, Cys-69, Cys-72, Cys-97, and Cys-100 together coordinate Zn(2+). A C4-type zinc finger spans residues 5-24 (CPKCNNLMLPKDGKLKCAVC). The TFIIS-type zinc finger occupies 65-105 (TRIECPKCGHNEAYWWLQQTRCADEPETRFYKCKKCGHTWR).

The protein belongs to the archaeal RpoM/eukaryotic RPA12/RPB9/RPC11 RNA polymerase family.

In terms of biological role, induces RNA cleavage activity in the RNA polymerase. In its presence, the cleavage activity of the RNA polymerase truncates the RNA back to position +15 in a stepwise manner by releasing mainly dinucleotides from the 3'-end of the nascent RNA. The truncated RNAs are able to continue elongation. Involved in transcriptional proofreading and fidelity. Misincorporation of nucleotides during elongation of transcription leads to arrested elongation complexes which are rescued by TFS-promoted removal of a dinucleotide from the 3'-end. TFS is able to induce a cleavage resynthesis cycle in stalled elongation complexes (resulting from the next missing nucleotide or a reduced incorporation rate of a wrong nucleotide) preventing misincorporation and enabling proofreading in a post-incorporation manner. Pausing of elongation complexes is the main determinant of TFS-induced RNA cleavage. The sequence is that of Transcription factor S from Methanocaldococcus jannaschii (strain ATCC 43067 / DSM 2661 / JAL-1 / JCM 10045 / NBRC 100440) (Methanococcus jannaschii).